Reading from the N-terminus, the 84-residue chain is Sec-independent protein translocase protein TatA (84 aa).

Residues 1 to 21 (MGGFSIWHWLIVLLIVVMVFG) form a helical membrane-spanning segment. Positions 40-84 (KDGMKDGGQSPADEKPVVPASQVTNAQAADKAERNTIDVEARQKS) are disordered. The span at 69–84 (DKAERNTIDVEARQKS) shows a compositional bias: basic and acidic residues.

This sequence belongs to the TatA/E family. As to quaternary structure, the Tat system comprises two distinct complexes: a TatABC complex, containing multiple copies of TatA, TatB and TatC subunits, and a separate TatA complex, containing only TatA subunits. Substrates initially bind to the TatABC complex, which probably triggers association of the separate TatA complex to form the active translocon.

Its subcellular location is the cell inner membrane. Its function is as follows. Part of the twin-arginine translocation (Tat) system that transports large folded proteins containing a characteristic twin-arginine motif in their signal peptide across membranes. TatA could form the protein-conducting channel of the Tat system. The sequence is that of Sec-independent protein translocase protein TatA from Polaromonas naphthalenivorans (strain CJ2).